The sequence spans 738 residues: Transcription activator of gluconeogenesis SMAC_06113 (738 aa).

Residues 1–65 (MPDDVGPAEA…KYDPKDPLRP (65 aa)) form a disordered region. Composition is skewed to basic and acidic residues over residues 28–39 (ATTKDDDEKMAE) and 51–64 (GDQK…DPLR). The segment at residues 74 to 102 (CYACQRAHLTCGDERPCQRCIKRGLAEAC) is a DNA-binding region (zn(2)-C6 fungal-type). Disordered stretches follow at residues 255–278 (SSGA…GDVG), 328–404 (HAYA…KRQR), 530–579 (GTNS…KEQP), and 636–673 (SVPT…TGAN). Composition is skewed to polar residues over residues 337–351 (TSLQ…SPQP) and 530–540 (GTNSDTLSVSS). Positions 475-546 (ALFEHEEFMH…SVSSKGGRGG (72 aa)) constitute a PAS domain. Composition is skewed to low complexity over residues 568-579 (QQQQSQQQKEQP) and 636-655 (SVPT…VNGG).

This sequence belongs to the ERT1/acuK family.

The protein resides in the nucleus. In terms of biological role, transcription factor which regulates nonfermentable carbon utilization. Activator of gluconeogenetic genes. The sequence is that of Transcription activator of gluconeogenesis SMAC_06113 from Sordaria macrospora (strain ATCC MYA-333 / DSM 997 / K(L3346) / K-hell).